Here is a 251-residue protein sequence, read N- to C-terminus: Flap endonuclease Xni (251 aa).

A Mg(2+)-binding site is contributed by Asp104. A 5'-3' exonuclease domain is found at 160-249 (VLPRQLPDYW…IDGNLQQLRL (90 aa)). 5 residues coordinate K(+): Leu171, Ala172, Pro180, Val182, and Ile185. Positions 184–189 (GIGPKS) are interaction with DNA.

This sequence belongs to the Xni family. Mg(2+) serves as cofactor. The cofactor is K(+).

Functionally, has flap endonuclease activity. During DNA replication, flap endonucleases cleave the 5'-overhanging flap structure that is generated by displacement synthesis when DNA polymerase encounters the 5'-end of a downstream Okazaki fragment. In Salmonella choleraesuis (strain SC-B67), this protein is Flap endonuclease Xni.